The following is a 218-amino-acid chain: NAD(P)H-quinone oxidoreductase subunit U, chloroplastic (218 aa).

The transit peptide at 1-53 (MASLSTITQPSLVHIPGESVLHHVPSTCSFPWKPTINTKRIICSPARNSSEVS) directs the protein to the chloroplast. A disordered region spans residues 47–72 (RNSSEVSAEAETEGGSSTAVDEAPKE). The J domain occupies 95–159 (DHYGRLGIFR…EERRMYDWSL (65 aa)). Residues 197-217 (ILGYFIGAWLVLGVALSVAFN) traverse the membrane as a helical segment.

As to quaternary structure, part of the chloroplast NDH complex, composed of a mixture of chloroplast and nucleus encoded subunits. Component of the electron donor-binding subcomplex, at least composed of NDHS, NDHT and NDHU.

It is found in the plastid. The protein resides in the chloroplast thylakoid membrane. It catalyses the reaction a plastoquinone + NADH + (n+1) H(+)(in) = a plastoquinol + NAD(+) + n H(+)(out). It carries out the reaction a plastoquinone + NADPH + (n+1) H(+)(in) = a plastoquinol + NADP(+) + n H(+)(out). Its function is as follows. NDH shuttles electrons from NAD(P)H:plastoquinone, via FMN and iron-sulfur (Fe-S) centers, to quinones in the photosynthetic chain and possibly in a chloroplast respiratory chain. The immediate electron acceptor for the enzyme in this species is believed to be plastoquinone. Couples the redox reaction to proton translocation, and thus conserves the redox energy in a proton gradient. The protein is NAD(P)H-quinone oxidoreductase subunit U, chloroplastic of Arabidopsis thaliana (Mouse-ear cress).